The sequence spans 303 residues: MSLDTSSSAIHLQLPPTSSSLRPPSQITVHPSVIAQILTHHSRHSADSESTRVIGALMGNRSDNGQEVDIRSCFAVPHTEQGQQISVDRPFQQDMVNFLAKNGTKEVIVGWYASQKTVNSNSAIIQEYFSFETNPYPAVHLTVDTDIEESGKGLGVKGWVSQPLGLTSKSECSVFVPVPVSIKYADSERAALDLLTAPQPTPSPALPPLPTLSNSLSQLSSLIDQCLAYVQSVNNGSQTPDVEIGRYLLEGLGRWSASGNEDEGGVKAGLQDTLTVEYLSSLVRSQVELAGRLSLLQQPVAQQ.

Residues 1-10 (MSLDTSSSAI) are compositionally biased toward polar residues. Residues 1 to 25 (MSLDTSSSAIHLQLPPTSSSLRPPS) form a disordered region. The span at 12–25 (LQLPPTSSSLRPPS) shows a compositional bias: low complexity. Positions 27-165 (ITVHPSVIAQ…VKGWVSQPLG (139 aa)) constitute an MPN domain.

It belongs to the eIF-3 subunit F family. As to quaternary structure, component of the eukaryotic translation initiation factor 3 (eIF-3) complex.

It localises to the cytoplasm. Functionally, component of the eukaryotic translation initiation factor 3 (eIF-3) complex, which is involved in protein synthesis of a specialized repertoire of mRNAs and, together with other initiation factors, stimulates binding of mRNA and methionyl-tRNAi to the 40S ribosome. The eIF-3 complex specifically targets and initiates translation of a subset of mRNAs involved in cell proliferation. This is Eukaryotic translation initiation factor 3 subunit F from Cryptococcus neoformans var. neoformans serotype D (strain B-3501A) (Filobasidiella neoformans).